The primary structure comprises 548 residues: Chaperonin GroEL (548 aa).

Residues 29-32, lysine 50, 86-90, glycine 416, and aspartate 497 each bind ATP; these read TLGP and DGTTT.

It belongs to the chaperonin (HSP60) family. Forms a cylinder of 14 subunits composed of two heptameric rings stacked back-to-back. Interacts with the co-chaperonin GroES.

It is found in the cytoplasm. It catalyses the reaction ATP + H2O + a folded polypeptide = ADP + phosphate + an unfolded polypeptide.. Its function is as follows. Together with its co-chaperonin GroES, plays an essential role in assisting protein folding. The GroEL-GroES system forms a nano-cage that allows encapsulation of the non-native substrate proteins and provides a physical environment optimized to promote and accelerate protein folding. This Neorickettsia sennetsu (strain ATCC VR-367 / Miyayama) (Ehrlichia sennetsu) protein is Chaperonin GroEL.